We begin with the raw amino-acid sequence, 348 residues long: GTPase Obg (348 aa).

The region spanning 1-159 is the Obg domain; that stretch reads MKFLDQAKIY…KTIILRLKLI (159 aa). The region spanning 160–327 is the OBG-type G domain; sequence ADAGLVGLPN…VLRLAADEIW (168 aa). GTP-binding positions include 166 to 173, 191 to 195, 212 to 215, 279 to 282, and 308 to 310; these read GLPNAGKS, FTTLT, DIPG, NKMD, and SGV. S173 and T193 together coordinate Mg(2+).

Belongs to the TRAFAC class OBG-HflX-like GTPase superfamily. OBG GTPase family. Monomer. Requires Mg(2+) as cofactor.

The protein resides in the cytoplasm. In terms of biological role, an essential GTPase which binds GTP, GDP and possibly (p)ppGpp with moderate affinity, with high nucleotide exchange rates and a fairly low GTP hydrolysis rate. Plays a role in control of the cell cycle, stress response, ribosome biogenesis and in those bacteria that undergo differentiation, in morphogenesis control. The protein is GTPase Obg of Parvibaculum lavamentivorans (strain DS-1 / DSM 13023 / NCIMB 13966).